A 291-amino-acid chain; its full sequence is m-AAA protease-interacting protein 1, mitochondrial (291 aa).

Residues 1–96 (MALAARLLPL…SLPASPSRSY (96 aa)) constitute a mitochondrion transit peptide.

In terms of assembly, interacts with AFG3L2. Interacts with SPG7. Interacts with SMDT1/EMRE (via the N-terminal transit peptide); interaction is direct and takes place before maturation of SMDT1/EMRE.

It is found in the mitochondrion matrix. Promotes sorting of SMDT1/EMRE in mitochondria by ensuring its maturation. Interacts with the transit peptide region of SMDT1/EMRE precursor protein in the mitochondrial matrix, leading to protect it against protein degradation by YME1L1, thereby ensuring SMDT1/EMRE maturation by the mitochondrial processing peptidase (PMPCA and PMPCB). The sequence is that of m-AAA protease-interacting protein 1, mitochondrial from Mus musculus (Mouse).